Consider the following 269-residue polypeptide: Probable cytochrome c oxidase subunit 2 (269 aa).

3 helical membrane passes run 8-28 (ITLI…PLPW), 50-70 (LLYI…FVCI), and 87-107 (ILIE…IAVP). Positions 189, 224, 228, and 232 each coordinate Cu cation.

The protein belongs to the cytochrome c oxidase subunit 2 family. Requires Cu cation as cofactor. It depends on heme as a cofactor.

Its subcellular location is the cell membrane. The enzyme catalyses 4 Fe(II)-[cytochrome c] + O2 + 8 H(+)(in) = 4 Fe(III)-[cytochrome c] + 2 H2O + 4 H(+)(out). In terms of biological role, subunits I and II form the functional core of the enzyme complex. Electrons originating in cytochrome c are transferred via heme a and Cu(A) to the binuclear center formed by heme a3 and Cu(B). The sequence is that of Probable cytochrome c oxidase subunit 2 (ctaC) from Rickettsia bellii (strain RML369-C).